Consider the following 30-residue polypeptide: Conotoxin TVIIA (30 aa).

3 cysteine pairs are disulfide-bonded: C2-C14, C9-C19, and C13-C24. Residues P10 and P11 each carry the 4-hydroxyproline modification.

Post-translationally, three different forms of TVIIA exist. Pro-10 and Pro-11 of conotoxin TVIIA are hydroxylated in TVIIA, whereas Pro-10 is not hydroxylated in [Pro10]TVIIA and neither Pro-10 nor Pro-11 are hydroxylated in [Pro10,11]TVIIA. In terms of tissue distribution, expressed by the venom duct.

Its subcellular location is the secreted. Its function is as follows. By structural similarity with conotoxin GS, may inhibit the sodium channel (Nav). No effect was observed upon intracranial injections into mice and intraperitoneal injections into goldfish (25 ug). This is Conotoxin TVIIA from Conus tulipa (Fish-hunting cone snail).